The primary structure comprises 175 residues: Major MR/P fimbria protein (175 aa).

Residues 1–23 form the signal peptide; sequence MKLNKLALVLGLGLSVVAGSALA. C42 and C81 form a disulfide bridge.

The protein belongs to the fimbrial protein family.

The protein resides in the fimbrium. In terms of biological role, major structural component of mannose-resistant/proteus-like fimbriae of P.mirabilis. This chain is Major MR/P fimbria protein (mrpA), found in Proteus mirabilis (strain HI4320).